The following is a 185-amino-acid chain: Ribosome-recycling factor (185 aa).

Basic and acidic residues predominate over residues 131-155 (DRKNANDKIKKSEKDKEITADESKS). The disordered stretch occupies residues 131 to 156 (DRKNANDKIKKSEKDKEITADESKSA).

This sequence belongs to the RRF family.

The protein localises to the cytoplasm. In terms of biological role, responsible for the release of ribosomes from messenger RNA at the termination of protein biosynthesis. May increase the efficiency of translation by recycling ribosomes from one round of translation to another. The polypeptide is Ribosome-recycling factor (Sulfurimonas denitrificans (strain ATCC 33889 / DSM 1251) (Thiomicrospira denitrificans (strain ATCC 33889 / DSM 1251))).